A 264-amino-acid chain; its full sequence is S-adenosylmethionine decarboxylase proenzyme (264 aa).

Serine 112 functions as the Schiff-base intermediate with substrate; via pyruvic acid in the catalytic mechanism. Serine 112 is subject to Pyruvic acid (Ser); by autocatalysis. Histidine 117 functions as the Proton acceptor; for processing activity in the catalytic mechanism. The Proton donor; for catalytic activity role is filled by cysteine 140.

The protein belongs to the prokaryotic AdoMetDC family. Type 2 subfamily. As to quaternary structure, heterooctamer of four alpha and four beta chains arranged as a tetramer of alpha/beta heterodimers. Pyruvate is required as a cofactor. Is synthesized initially as an inactive proenzyme. Formation of the active enzyme involves a self-maturation process in which the active site pyruvoyl group is generated from an internal serine residue via an autocatalytic post-translational modification. Two non-identical subunits are generated from the proenzyme in this reaction, and the pyruvate is formed at the N-terminus of the alpha chain, which is derived from the carboxyl end of the proenzyme. The post-translation cleavage follows an unusual pathway, termed non-hydrolytic serinolysis, in which the side chain hydroxyl group of the serine supplies its oxygen atom to form the C-terminus of the beta chain, while the remainder of the serine residue undergoes an oxidative deamination to produce ammonia and the pyruvoyl group blocking the N-terminus of the alpha chain.

It carries out the reaction S-adenosyl-L-methionine + H(+) = S-adenosyl 3-(methylsulfanyl)propylamine + CO2. It functions in the pathway amine and polyamine biosynthesis; S-adenosylmethioninamine biosynthesis; S-adenosylmethioninamine from S-adenosyl-L-methionine: step 1/1. In terms of biological role, catalyzes the decarboxylation of S-adenosylmethionine to S-adenosylmethioninamine (dcAdoMet), the propylamine donor required for the synthesis of the polyamines spermine and spermidine from the diamine putrescine. The polypeptide is S-adenosylmethionine decarboxylase proenzyme (Escherichia coli O127:H6 (strain E2348/69 / EPEC)).